The primary structure comprises 139 residues: Large ribosomal subunit protein uL16 (139 aa).

Positions 1–21 (MLMPKRVQYRKTQRGRMKGNA) are disordered. The span at 7-17 (VQYRKTQRGRM) shows a compositional bias: basic residues.

The protein belongs to the universal ribosomal protein uL16 family. Part of the 50S ribosomal subunit.

Its function is as follows. Binds 23S rRNA and is also seen to make contacts with the A and possibly P site tRNAs. The sequence is that of Large ribosomal subunit protein uL16 from Chlorobaculum tepidum (strain ATCC 49652 / DSM 12025 / NBRC 103806 / TLS) (Chlorobium tepidum).